The following is a 240-amino-acid chain: UDP-2,3-diacylglucosamine hydrolase (240 aa).

Mn(2+)-binding residues include Asp8, His10, Asp41, Asn78, and His113. 78–79 is a binding site for substrate; it reads NR. Substrate is bound by residues Asp121, Ser159, Asn163, Lys166, and His194. Positions 194 and 196 each coordinate Mn(2+).

The protein belongs to the LpxH family. Mn(2+) serves as cofactor.

Its subcellular location is the cell inner membrane. It catalyses the reaction UDP-2-N,3-O-bis[(3R)-3-hydroxytetradecanoyl]-alpha-D-glucosamine + H2O = 2-N,3-O-bis[(3R)-3-hydroxytetradecanoyl]-alpha-D-glucosaminyl 1-phosphate + UMP + 2 H(+). It participates in glycolipid biosynthesis; lipid IV(A) biosynthesis; lipid IV(A) from (3R)-3-hydroxytetradecanoyl-[acyl-carrier-protein] and UDP-N-acetyl-alpha-D-glucosamine: step 4/6. In terms of biological role, hydrolyzes the pyrophosphate bond of UDP-2,3-diacylglucosamine to yield 2,3-diacylglucosamine 1-phosphate (lipid X) and UMP by catalyzing the attack of water at the alpha-P atom. Involved in the biosynthesis of lipid A, a phosphorylated glycolipid that anchors the lipopolysaccharide to the outer membrane of the cell. This Shewanella baltica (strain OS185) protein is UDP-2,3-diacylglucosamine hydrolase.